Consider the following 194-residue polypeptide: RNA polymerase II subunit A C-terminal domain phosphatase SSU72 like protein 4 (194 aa).

The protein belongs to the SSU72 phosphatase family.

It localises to the nucleus. The enzyme catalyses O-phospho-L-seryl-[protein] + H2O = L-seryl-[protein] + phosphate. It carries out the reaction O-phospho-L-threonyl-[protein] + H2O = L-threonyl-[protein] + phosphate. Functionally, protein phosphatase that catalyzes the dephosphorylation of the C-terminal domain of RNA polymerase II. Plays a role in RNA processing and termination. The chain is RNA polymerase II subunit A C-terminal domain phosphatase SSU72 like protein 4 from Homo sapiens (Human).